The primary structure comprises 424 residues: Histidine--tRNA ligase (424 aa).

The protein belongs to the class-II aminoacyl-tRNA synthetase family. Homodimer.

The protein resides in the cytoplasm. The catalysed reaction is tRNA(His) + L-histidine + ATP = L-histidyl-tRNA(His) + AMP + diphosphate + H(+). The chain is Histidine--tRNA ligase from Pediococcus pentosaceus (strain ATCC 25745 / CCUG 21536 / LMG 10740 / 183-1w).